The chain runs to 1138 residues: Nuclear pore complex-interacting protein family member B13 (1138 aa).

A helical membrane pass occupies residues 73 to 93 (VVITLWIVYLWVSLLKTIFWS). Disordered regions lie at residues 242-578 (RMGH…NIKT) and 747-1138 (ERLR…RRLS). The segment covering 252–263 (QQHSITDNSLSL) has biased composition (polar residues). Residues 349 to 359 (PLPPSAPPSAP) are compositionally biased toward pro residues. Composition is skewed to basic and acidic residues over residues 406-416 (DNIKTPAERLR), 448-458 (DNIKTPAERLR), 490-500 (DNIKTPAERLR), 532-542 (DNIKTPAERLR), 782-792 (DNIKTPAERLR), 824-834 (DNIKTPAERLR), 866-876 (DNIKTPAERLR), 908-918 (DNIKTPAERLR), 950-960 (DNIKTPAERLR), and 992-1002 (DNIKTPAERLR).

This sequence belongs to the NPIP family.

The protein resides in the membrane. This is Nuclear pore complex-interacting protein family member B13 from Homo sapiens (Human).